Consider the following 354-residue polypeptide: Peptide-N(4)-(N-acetyl-beta-D-glucosaminyl)asparagine amidase F (354 aa).

An N-terminal signal peptide occupies residues 1–40 (MRKLLIFSISAYLMAGIVSCKGVDSATPVTEDRLALNAVN). An intrachain disulfide couples Cys-91 to Cys-96. Catalysis depends on residues Asp-100, Glu-158, and Glu-246. Cystine bridges form between Cys-244–Cys-248 and Cys-271–Cys-292.

In terms of assembly, monomer.

It carries out the reaction Hydrolysis of an N(4)-(acetyl-beta-D-glucosaminyl)asparagine residue in which the glucosamine residue may be further glycosylated, to yield a (substituted) N-acetyl-beta-D-glucosaminylamine and a peptide containing an aspartate residue.. Its function is as follows. Cleaves an entire glycan from a glycoprotein. Requires that the glycosylated asparagine moiety (reaction 1) be substituted on its amino (R1) and carboxyl (R2) terminus with a polypeptide chain. This chain is Peptide-N(4)-(N-acetyl-beta-D-glucosaminyl)asparagine amidase F (ngl), found in Elizabethkingia miricola (Chryseobacterium miricola).